The chain runs to 147 residues: MSIRLENLSYTPGARKEKHRKGRGHAAGKGKQAGRGQSGQKKRSTVRLGFEGGQNPWFRRVPKRGFRNFNKKEYEIFNLSDLESRYQYGDTVSLESLYLKKVLKKRNLKAKLLAKGDLTKKLTVTTNAFSIAAQKKIEEKGGKIEVR.

The disordered stretch occupies residues 1–46; the sequence is MSIRLENLSYTPGARKEKHRKGRGHAAGKGKQAGRGQSGQKKRSTV. Basic residues predominate over residues 16 to 28; that stretch reads KEKHRKGRGHAAG.

Belongs to the universal ribosomal protein uL15 family. As to quaternary structure, part of the 50S ribosomal subunit.

Binds to the 23S rRNA. The protein is Large ribosomal subunit protein uL15 of Mesomycoplasma hyopneumoniae (strain 7448) (Mycoplasma hyopneumoniae).